The chain runs to 95 residues: NADH-quinone oxidoreductase subunit K (95 aa).

Helical transmembrane passes span 1–21 (MSYL…VLTR), 25–45 (ILVF…LVGF), and 59–79 (MVIA…VAIF).

This sequence belongs to the complex I subunit 4L family. In terms of assembly, NDH-1 is composed of 15 different subunits. Subunits NuoA, H, J, K, L, M, N constitute the membrane sector of the complex.

The protein resides in the cell inner membrane. The catalysed reaction is a quinone + NADH + 5 H(+)(in) = a quinol + NAD(+) + 4 H(+)(out). In terms of biological role, NDH-1 shuttles electrons from NADH, via FMN and iron-sulfur (Fe-S) centers, to quinones in the respiratory chain. The immediate electron acceptor for the enzyme in this species is believed to be a menaquinone. Couples the redox reaction to proton translocation (for every two electrons transferred, four hydrogen ions are translocated across the cytoplasmic membrane), and thus conserves the redox energy in a proton gradient. The polypeptide is NADH-quinone oxidoreductase subunit K (Thermus thermophilus (strain ATCC BAA-163 / DSM 7039 / HB27)).